A 200-amino-acid chain; its full sequence is Large ribosomal subunit protein uL4c (200 aa).

Residues 45–71 form a disordered region; the sequence is RAEIRGGGRKPWKQKGTGRARAGSRRS. Positions 51–68 are enriched in basic residues; it reads GGRKPWKQKGTGRARAGS.

The protein belongs to the universal ribosomal protein uL4 family. Part of the 50S ribosomal subunit.

The protein resides in the plastid. Its subcellular location is the chloroplast. In terms of biological role, probably binds the 23S rRNA. The chain is Large ribosomal subunit protein uL4c (rpl4) from Cyanidioschyzon merolae (strain NIES-3377 / 10D) (Unicellular red alga).